A 420-amino-acid polypeptide reads, in one-letter code: Serine hydroxymethyltransferase (420 aa).

Residues Leu-121 and 125–127 contribute to the (6S)-5,6,7,8-tetrahydrofolate site; that span reads GHL. N6-(pyridoxal phosphate)lysine is present on Lys-229.

This sequence belongs to the SHMT family. Homodimer. Pyridoxal 5'-phosphate is required as a cofactor.

The protein localises to the cytoplasm. The catalysed reaction is (6R)-5,10-methylene-5,6,7,8-tetrahydrofolate + glycine + H2O = (6S)-5,6,7,8-tetrahydrofolate + L-serine. It participates in one-carbon metabolism; tetrahydrofolate interconversion. It functions in the pathway amino-acid biosynthesis; glycine biosynthesis; glycine from L-serine: step 1/1. In terms of biological role, catalyzes the reversible interconversion of serine and glycine with tetrahydrofolate (THF) serving as the one-carbon carrier. This reaction serves as the major source of one-carbon groups required for the biosynthesis of purines, thymidylate, methionine, and other important biomolecules. Also exhibits THF-independent aldolase activity toward beta-hydroxyamino acids, producing glycine and aldehydes, via a retro-aldol mechanism. This chain is Serine hydroxymethyltransferase, found in Glaesserella parasuis serovar 5 (strain SH0165) (Haemophilus parasuis).